Reading from the N-terminus, the 216-residue chain is Pyrophosphatase PpaX (216 aa).

The Nucleophile role is filled by Asp-12.

It belongs to the HAD-like hydrolase superfamily. PpaX family. Mg(2+) is required as a cofactor.

It carries out the reaction diphosphate + H2O = 2 phosphate + H(+). Its function is as follows. Hydrolyzes pyrophosphate formed during P-Ser-HPr dephosphorylation by HPrK/P. Might play a role in controlling the intracellular pyrophosphate pool. This Bacillus pumilus (strain SAFR-032) protein is Pyrophosphatase PpaX.